A 398-amino-acid chain; its full sequence is DNA replication and repair protein RecF (398 aa).

30 to 37 provides a ligand contact to ATP; that stretch reads GSNGLGKT.

Belongs to the RecF family.

The protein resides in the cytoplasm. The RecF protein is involved in DNA metabolism; it is required for DNA replication and normal SOS inducibility. RecF binds preferentially to single-stranded, linear DNA. It also seems to bind ATP. This is DNA replication and repair protein RecF from Renibacterium salmoninarum (strain ATCC 33209 / DSM 20767 / JCM 11484 / NBRC 15589 / NCIMB 2235).